The chain runs to 172 residues: Adenine phosphoribosyltransferase (172 aa).

Belongs to the purine/pyrimidine phosphoribosyltransferase family. As to quaternary structure, homodimer.

The protein localises to the cytoplasm. It carries out the reaction AMP + diphosphate = 5-phospho-alpha-D-ribose 1-diphosphate + adenine. Its pathway is purine metabolism; AMP biosynthesis via salvage pathway; AMP from adenine: step 1/1. Functionally, catalyzes a salvage reaction resulting in the formation of AMP, that is energically less costly than de novo synthesis. In Anaeromyxobacter dehalogenans (strain 2CP-C), this protein is Adenine phosphoribosyltransferase.